The sequence spans 358 residues: Pyruvate dehydrogenase E1 component subunit alpha (358 aa).

As to quaternary structure, heterodimer of an alpha and a beta chain. The cofactor is thiamine diphosphate.

It catalyses the reaction N(6)-[(R)-lipoyl]-L-lysyl-[protein] + pyruvate + H(+) = N(6)-[(R)-S(8)-acetyldihydrolipoyl]-L-lysyl-[protein] + CO2. Functionally, the pyruvate dehydrogenase complex catalyzes the overall conversion of pyruvate to acetyl-CoA and CO(2). It contains multiple copies of three enzymatic components: pyruvate dehydrogenase (E1), dihydrolipoamide acetyltransferase (E2) and lipoamide dehydrogenase (E3). This Mycoplasma pneumoniae (strain ATCC 29342 / M129 / Subtype 1) (Mycoplasmoides pneumoniae) protein is Pyruvate dehydrogenase E1 component subunit alpha (pdhA).